A 288-amino-acid chain; its full sequence is Pyridoxal kinase PdxY (288 aa).

Residues Ser-10 and 45–46 (TQ) contribute to the substrate site. 4 residues coordinate ATP: Asp-112, Ala-143, Glu-148, and Lys-181. A substrate-binding site is contributed by Asp-222.

Belongs to the pyridoxine kinase family. PdxY subfamily. In terms of assembly, homodimer. Mg(2+) is required as a cofactor.

The enzyme catalyses pyridoxal + ATP = pyridoxal 5'-phosphate + ADP + H(+). It functions in the pathway cofactor metabolism; pyridoxal 5'-phosphate salvage; pyridoxal 5'-phosphate from pyridoxal: step 1/1. Its function is as follows. Pyridoxal kinase involved in the salvage pathway of pyridoxal 5'-phosphate (PLP). Catalyzes the phosphorylation of pyridoxal to PLP. In Paraburkholderia xenovorans (strain LB400), this protein is Pyridoxal kinase PdxY.